The sequence spans 278 residues: ADP-dependent (S)-NAD(P)H-hydrate dehydratase (278 aa).

Residues 5 to 272 (TTEIVSRTII…TRIPTYMHRF (268 aa)) form the YjeF C-terminal domain. Positions 40, 103, and 152 each coordinate (6S)-NADPHX. Residue Gly-214 coordinates AMP. Residue Asp-215 participates in (6S)-NADPHX binding.

This sequence belongs to the NnrD/CARKD family. In terms of assembly, homotetramer. Requires Mg(2+) as cofactor.

It carries out the reaction (6S)-NADHX + ADP = AMP + phosphate + NADH + H(+). The enzyme catalyses (6S)-NADPHX + ADP = AMP + phosphate + NADPH + H(+). Functionally, catalyzes the dehydration of the S-form of NAD(P)HX at the expense of ADP, which is converted to AMP. Together with NAD(P)HX epimerase, which catalyzes the epimerization of the S- and R-forms, the enzyme allows the repair of both epimers of NAD(P)HX, a damaged form of NAD(P)H that is a result of enzymatic or heat-dependent hydration. The chain is ADP-dependent (S)-NAD(P)H-hydrate dehydratase from Lactiplantibacillus plantarum (strain ATCC BAA-793 / NCIMB 8826 / WCFS1) (Lactobacillus plantarum).